Reading from the N-terminus, the 88-residue chain is Putative membrane protein insertion efficiency factor (88 aa).

Belongs to the UPF0161 family.

It localises to the cell membrane. Could be involved in insertion of integral membrane proteins into the membrane. The polypeptide is Putative membrane protein insertion efficiency factor (Exiguobacterium sibiricum (strain DSM 17290 / CCUG 55495 / CIP 109462 / JCM 13490 / 255-15)).